The sequence spans 100 residues: Proline-rich protein 15-like protein (100 aa).

Residues 29–51 are disordered; it reads YAQTEGGAEPPGPDAGDPHSDFN.

This sequence belongs to the PRR15 family.

This is Proline-rich protein 15-like protein (Prr15l) from Mus musculus (Mouse).